The sequence spans 542 residues: Membrane protein insertase YidC (542 aa).

A helical membrane pass occupies residues 6–26 (NILLIGLLFVSFLLWQQWQAD). Positions 32-41 (VAQTQSSVAP) are enriched in polar residues. The disordered stretch occupies residues 32–57 (VAQTQSSVAPSTVADAHSSDVPDADS). The next 5 helical transmembrane spans lie at 326–346 (LVVD…LLMF), 350–370 (FVGN…GMLY), 421–441 (GGCL…WVLL), 458–478 (LSVQ…MFIM), and 501–521 (VIFT…WLVG).

It belongs to the OXA1/ALB3/YidC family. Type 1 subfamily. In terms of assembly, interacts with the Sec translocase complex via SecD. Specifically interacts with transmembrane segments of nascent integral membrane proteins during membrane integration.

It localises to the cell inner membrane. Required for the insertion and/or proper folding and/or complex formation of integral membrane proteins into the membrane. Involved in integration of membrane proteins that insert both dependently and independently of the Sec translocase complex, as well as at least some lipoproteins. Aids folding of multispanning membrane proteins. This chain is Membrane protein insertase YidC, found in Shewanella piezotolerans (strain WP3 / JCM 13877).